The primary structure comprises 448 residues: UPF0210 protein Pisl_0759 (448 aa).

The protein belongs to the UPF0210 family.

This Pyrobaculum islandicum (strain DSM 4184 / JCM 9189 / GEO3) protein is UPF0210 protein Pisl_0759.